Consider the following 310-residue polypeptide: Protoheme IX farnesyltransferase (310 aa).

9 consecutive transmembrane segments (helical) span residues 31-51 (VMSLVIFTGFVGMWLAPDSIH), 52-72 (PLIAGIAVICIALGAGSAGAM), 102-119 (ALSFGLITGFFAVFFMAL), 123-145 (ILASFLLLFTIFYYICIYTIWLK), 151-171 (NIVIGGVSGALPPVIGHAAVS), 179-199 (IILFLIIFIWTPPHSWAIALF), 225-245 (ILIYSIILFIVSLMPFFIGMN), 248-268 (IYLIIVCIIGLVFLYYAFSLF), and 281-301 (FTYSIFYLCFIFILLSSTSTI).

Belongs to the UbiA prenyltransferase family. Protoheme IX farnesyltransferase subfamily.

It localises to the cell inner membrane. The catalysed reaction is heme b + (2E,6E)-farnesyl diphosphate + H2O = Fe(II)-heme o + diphosphate. It participates in porphyrin-containing compound metabolism; heme O biosynthesis; heme O from protoheme: step 1/1. Converts heme B (protoheme IX) to heme O by substitution of the vinyl group on carbon 2 of heme B porphyrin ring with a hydroxyethyl farnesyl side group. This Rickettsia prowazekii (strain Madrid E) protein is Protoheme IX farnesyltransferase.